The primary structure comprises 339 residues: GDP-fucose transporter 1 (339 aa).

The next 8 helical transmembrane spans lie at 9–29 (SVRI…LVFL), 45–65 (LFVT…LSLL), 82–102 (LSVA…ITFN), 111–133 (VSFY…YVIL), 136–156 (STSY…LMGV), 165–185 (ISYS…LNAI), 209–229 (ACFL…VAHF), and 237–257 (FWLM…ITGL). The tract at residues 319–339 (AHTIQASKDDKALQEDGQTKV) is disordered. The segment covering 325–339 (SKDDKALQEDGQTKV) has biased composition (basic and acidic residues).

It belongs to the TPT transporter family. SLC35C subfamily.

The protein localises to the golgi apparatus membrane. The enzyme catalyses GMP(out) + GDP-beta-L-fucose(in) = GMP(in) + GDP-beta-L-fucose(out). In terms of biological role, antiporter specific for GDP-l-fucose and depending on the concomitant reverse transport of GMP. Involved in GDP-fucose import from the cytoplasm into the Golgi lumen. This is GDP-fucose transporter 1 (slc35c1) from Nematostella vectensis (Starlet sea anemone).